A 315-amino-acid polypeptide reads, in one-letter code: MIKIIIGYVLDLIIGDPNNPYHPIRYIGKLASNMEKLWRKVFKKNLKIAGFFAWLFIVFITFGVTLGIVHIANKINPILGTVVSGILIYFCISAKGLKVEGLKVIKILKEGDIVKARKQLSYIVGRDTENLDEEAIVRAVVETVAENMSDGIIAPLFFAGIGGAPLAFLYKAVNTCDSMFGYKNEKYKDFGFFSAKLDDVFNYIPARLTAYLIVISSFILRLNCKNIFKIYKRDRYNHSSPNSAHPEAAVAGALGIRLGGANYYFGKLVEKPTIGDAKKKIEISDVYKTNNILGMVSFLGMVVALIIRCILEVII.

Transmembrane regions (helical) follow at residues 48 to 68, 77 to 97, 150 to 170, 200 to 220, and 295 to 315; these read IAGFFAWLFIVFITFGVTLGI, PILGTVVSGILIYFCISAKGL, DGIIAPLFFAGIGGAPLAFLY, VFNYIPARLTAYLIVISSFIL, and MVSFLGMVVALIIRCILEVII.

It belongs to the CobD/CbiB family.

The protein localises to the cell membrane. It functions in the pathway cofactor biosynthesis; adenosylcobalamin biosynthesis. Functionally, converts cobyric acid to cobinamide by the addition of aminopropanol on the F carboxylic group. The polypeptide is Cobalamin biosynthesis protein CobD (Clostridium perfringens (strain 13 / Type A)).